We begin with the raw amino-acid sequence, 435 residues long: Trigger factor (435 aa).

In terms of domain architecture, PPIase FKBP-type spans 163–248 (GDRVTIDFEG…LTRIEAQNLP (86 aa)).

It belongs to the FKBP-type PPIase family. Tig subfamily.

It is found in the cytoplasm. The enzyme catalyses [protein]-peptidylproline (omega=180) = [protein]-peptidylproline (omega=0). Involved in protein export. Acts as a chaperone by maintaining the newly synthesized protein in an open conformation. Functions as a peptidyl-prolyl cis-trans isomerase. This Leptothrix cholodnii (strain ATCC 51168 / LMG 8142 / SP-6) (Leptothrix discophora (strain SP-6)) protein is Trigger factor.